The primary structure comprises 648 residues: Protein KASH5 (648 aa).

The Cytoplasmic portion of the chain corresponds to Met1 to His606. Residues Pro206–Ala228 form a disordered region. Positions Ala230–Gly420 form a coiled coil. Residues Glu473 to Ser497 show a composition bias toward acidic residues. Residues Glu473–Ser545 form a disordered region. A helical; Anchor for type IV membrane protein membrane pass occupies residues Pro607–Phe627. Over Ser628–Val648 the chain is Perinuclear space.

Core component the LINC complex which is composed of inner nuclear membrane SUN domain-containing proteins coupled to outer nuclear membrane KASH domain-containing nesprins. SUN and KASH domain-containing proteins seem to bind each other promiscuously; however, differentially expression of LINC complex constituents is giving rise to specific assemblies. At least SUN1/2-containing core LINC complexes are proposed to be hexameric composed of three protomers of each KASH and SUN domain-containing protein. Interacts with SUN1; this interaction mediates its telomere localization by forming a SUN1:KASH5 LINC complex. Component of a probable SUN2:KASH5 LINC complex. Self-associates. Interacts with DYNC1H1, DCTN1, DYNC1I1/2 and PAFAH1B1; suggesting the association with the dynein-dynactin motor complex. In terms of tissue distribution, restricted to the testis and the early ootidogenesis ovary. Expressed in spermatocytes and oocytes (at protein level).

The protein resides in the nucleus outer membrane. It is found in the nucleus. Its subcellular location is the chromosome. It localises to the telomere. The protein localises to the nucleus envelope. Functionally, as a component of the LINC (LInker of Nucleoskeleton and Cytoskeleton) complex, involved in the connection between the nuclear lamina and the cytoskeleton. The nucleocytoplasmic interactions established by the LINC complex play an important role in the transmission of mechanical forces across the nuclear envelope and in nuclear movement and positioning. Required for telomere attachment to nuclear envelope in the prophase of meiosis and for rapid telomere prophase movements implicating a SUN1/2:KASH5 LINC complex in which SUN1 and SUN2 seem to act at least partial redundantly. Required for homolog pairing during meiotic prophase in spermatocytes and probably oocytes. Essential for male and female gametogenesis. Recruits cytoplasmic dynein to telomere attachment sites at the nuclear envelope in spermatocytes. In oocytes is involved in meiotic resumption and spindle formation. The sequence is that of Protein KASH5 from Mus musculus (Mouse).